We begin with the raw amino-acid sequence, 307 residues long: Ornithine carbamoyltransferase (307 aa).

Carbamoyl phosphate-binding positions include 50-53 (STRT), Gln77, Arg101, and 128-131 (HPCQ). L-ornithine contacts are provided by residues Asn160, Asp224, and 228–229 (SM). Residues 264 to 265 (CL) and Arg292 each bind carbamoyl phosphate.

Belongs to the aspartate/ornithine carbamoyltransferase superfamily. OTCase family.

The protein localises to the cytoplasm. The catalysed reaction is carbamoyl phosphate + L-ornithine = L-citrulline + phosphate + H(+). It functions in the pathway amino-acid biosynthesis; L-arginine biosynthesis; L-arginine from L-ornithine and carbamoyl phosphate: step 1/3. Inhibited by arginine, norvaline. Reversibly catalyzes the transfer of the carbamoyl group from carbamoyl phosphate (CP) to the N(epsilon) atom of ornithine (ORN) to produce L-citrulline, which is a substrate for argininosuccinate synthetase, the enzyme involved in the final step in arginine biosynthesis. This Mycolicibacterium smegmatis (strain ATCC 700084 / mc(2)155) (Mycobacterium smegmatis) protein is Ornithine carbamoyltransferase.